The following is a 92-amino-acid chain: Alpha-elapitoxin-Lh2a (92 aa).

A signal peptide spans 1–21; that stretch reads MKTLLLTLVVVTIVCLDLGDS. 5 cysteine pairs are disulfide-bonded: cysteine 24–cysteine 41, cysteine 34–cysteine 62, cysteine 47–cysteine 51, cysteine 66–cysteine 77, and cysteine 78–cysteine 83.

It belongs to the three-finger toxin family. Long-chain subfamily. Type II alpha-neurotoxin sub-subfamily. In terms of tissue distribution, expressed by the venom gland.

It localises to the secreted. Binds with high affinity to muscular (alpha-1/CHRNA1) and neuronal (alpha-7/CHRNA7) nicotinic acetylcholine receptor (nAChR) and inhibits acetylcholine from binding to the receptor, thereby impairing neuromuscular and neuronal transmission. This is Alpha-elapitoxin-Lh2a from Hydrophis hardwickii (Hardwick's spine-bellied seasnake).